Reading from the N-terminus, the 471-residue chain is T-box transcription factor T (471 aa).

Positions 24–196 (LWTKFCSLTN…HNPFAKAFLD (173 aa)) form a DNA-binding region, T-box.

In terms of tissue distribution, developing notochord.

Its subcellular location is the nucleus. Functionally, involved in the transcriptional regulation of genes required for mesoderm differentiation. The polypeptide is T-box transcription factor T (Halocynthia roretzi (Sea squirt)).